A 1364-amino-acid polypeptide reads, in one-letter code: Serine protease SepA autotransporter (1364 aa).

Positions 1–56 (MNKIYYLKYCHITKSLIAVSELARRVTCKSHRRLSRRVILTSVAALSLSSAWPALS) are cleaved as a signal peptide. Residues 57-307 (ATVSAEIPYQ…VVTTQDFLGQ (251 aa)) form the Peptidase S6 domain. Catalysis depends on charge relay system residues His-134, Asp-162, and Ser-267. One can recognise an Autotransporter domain in the interval 1098–1364 (DTQGDAGVWA…AINANFRYVF (267 aa)).

Post-translationally, cleaved to release the mature protein from the outer membrane. Cleavage is performed by an unknown protease.

It localises to the periplasm. Its subcellular location is the secreted. It is found in the cell surface. The protein localises to the cell outer membrane. Inhibited by the serine protease inhibitor PMSF, but not by benzamidine, alpha 1-antitrypsin, alpha 1-antichymotrypsin. Not inhibited by metalloprotease inhibitors such as EDTA and orthophenanthroline. Major protein secreted in laboratory media showing proteolytic activity. May be involved in invasion and destruction of host intestinal epithelium. The sequence is that of Serine protease SepA autotransporter (sepA) from Shigella flexneri.